The following is a 919-amino-acid chain: Transcriptional regulatory protein EDS1 (919 aa).

Residues 1–54 are disordered; the sequence is MSHHVPNLYGTPIRDPHERKRNSASMGEVNQSVSSRNCERGSEKGTKQRKKASH. A compositionally biased stretch (polar residues) spans 23–36; the sequence is SASMGEVNQSVSSR. Residues 37-46 show a composition bias toward basic and acidic residues; sequence NCERGSEKGT. The zn(2)-C6 fungal-type DNA-binding region spans 56–85; that stretch reads CDQCRRKRIKCRFDKHTGVCQGCLEVGEKC. The tract at residues 297 to 338 is disordered; that stretch reads AGFPNKKLGTDGRSDKWDKNSTWKPVYRSSNPSHPSTEKNVS. Residues 304 to 317 are compositionally biased toward basic and acidic residues; that stretch reads LGTDGRSDKWDKNS. Over residues 318–338 the composition is skewed to polar residues; that stretch reads TWKPVYRSSNPSHPSTEKNVS.

The protein belongs to the EDS1/RGT1 family. As to quaternary structure, binds DNA in a sequence-specific manner.

The protein resides in the nucleus. In Saccharomyces cerevisiae (strain ATCC 204508 / S288c) (Baker's yeast), this protein is Transcriptional regulatory protein EDS1 (EDS1).